The sequence spans 770 residues: Nucleus-vacuole junction protein 2 (770 aa).

Residues 1 to 5 (MASLK) lie on the Cytoplasmic side of the membrane. The helical; Signal-anchor for type II membrane protein transmembrane segment at 6-26 (VFLAVYLLGGITFLPLVLFTL) threads the bilayer. The Lumenal portion of the chain corresponds to 27 to 770 (YKIHLLYSNL…EFEEQREPKL (744 aa)). In terms of domain architecture, PH spans 114–266 (TALQEQILQR…WYYQLINASK (153 aa)). N-linked (GlcNAc...) asparagine glycosylation is found at Asn228, Asn263, Asn279, Asn300, Asn391, Asn528, and Asn529. The 201-residue stretch at 304–504 (NQLTTKWLNA…YPTPNEVYRG (201 aa)) folds into the SMP-LTD domain. Disordered stretches follow at residues 541–566 (EGGM…LKDL), 578–600 (TQTT…TKSR), and 615–770 (KDNV…EPKL). Positions 554 to 566 (LRPERKKENLKDL) are enriched in basic and acidic residues. Polar residues predominate over residues 587–596 (NDDVSSSENS). N-linked (GlcNAc...) asparagine glycans are attached at residues Asn595 and Asn620. A phosphoserine mark is found at Ser640 and Ser669. Residues 679–688 (LEGRKEKDTE) show a composition bias toward basic and acidic residues. N-linked (GlcNAc...) asparagine glycosylation occurs at Asn700. Composition is skewed to polar residues over residues 713–725 (FSVS…NSLK) and 736–751 (LESS…QNRF). The residue at position 717 (Ser717) is a Phosphoserine. The N-linked (GlcNAc...) asparagine glycan is linked to Asn718. Phosphoserine occurs at positions 720 and 723. Residues 756 to 770 (FKQDLEFEEQREPKL) are compositionally biased toward basic and acidic residues.

The protein localises to the endoplasmic reticulum membrane. It localises to the nucleus membrane. Functionally, during endoplasmic reticulum (ER) stress or when cellular ceramide levels increase, induces contacts between the ER and medial-Golgi complex to facilitate non-vesicular transport of ceramides from the ER to the Golgi complex where they are converted to complex sphingolipids, preventing toxic ceramide accumulation. This Saccharomyces cerevisiae (strain ATCC 204508 / S288c) (Baker's yeast) protein is Nucleus-vacuole junction protein 2.